The following is a 334-amino-acid chain: MSSVLQKLITPLASSSAEPPRNKVTVVGVGQVGMACAVSILLRDLCDELALVDVMEDRLKGEMMDLQHGLLFLKTSKVVADKDYAVTANSRLVVVTAGVRQQEGESRLNLVQRNVNVFKCIIPQIIKYSPNCTILVVSNPVDVLTYVTWKLSGLPKHRVIGSGTNLDSARFRYMMAERLGIHASAFNGWVLGEHGDTSVPVWSGANVAGVSLQKLNPEIGTDGDKEQWKATHKAVVDSAYEVIKLKGYTNWAIGFSVADLTESIVKNLSRVHPVSTMVKDMFGIGEEVFLSLPCVLNGSGVGSVVNMTLTDAEVAQLKKSADTLWGIQKDLKDL.

NAD(+) is bound by residues 30-58 (GQVG…MEDR) and R100. Residues R107, N139, and R170 each contribute to the substrate site. N139 provides a ligand contact to NAD(+). H194 acts as the Proton acceptor in catalysis. T249 contributes to the substrate binding site.

This sequence belongs to the LDH/MDH superfamily. LDH family. In terms of assembly, homotetramer.

The protein localises to the cytoplasm. The enzyme catalyses (S)-lactate + NAD(+) = pyruvate + NADH + H(+). The protein operates within fermentation; pyruvate fermentation to lactate; (S)-lactate from pyruvate: step 1/1. In terms of biological role, interconverts simultaneously and stereospecifically pyruvate and lactate with concomitant interconversion of NADH and NAD(+). The polypeptide is L-lactate dehydrogenase B chain (ldhb) (Fundulus heteroclitus (Killifish)).